We begin with the raw amino-acid sequence, 617 residues long: UvrABC system protein C (617 aa).

Residues 22–100 (KLPGVYRFFD…IKALSPKYNI (79 aa)) form the GIY-YIG domain. The 36-residue stretch at 209 to 244 (DELTRTLQHKMQTAAANLQFEEAARYRDQIQALGIM) folds into the UVR domain.

It belongs to the UvrC family. In terms of assembly, interacts with UvrB in an incision complex.

It is found in the cytoplasm. Its function is as follows. The UvrABC repair system catalyzes the recognition and processing of DNA lesions. UvrC both incises the 5' and 3' sides of the lesion. The N-terminal half is responsible for the 3' incision and the C-terminal half is responsible for the 5' incision. The protein is UvrABC system protein C of Neisseria meningitidis serogroup A / serotype 4A (strain DSM 15465 / Z2491).